Reading from the N-terminus, the 359-residue chain is sn-1 linoleoyl-lipid 6-desaturase (359 aa).

2 helical membrane passes run 45-65 (LIIVLWLFSAWAFVLFAPVIF) and 69-89 (LLGCMVLAIALAAFSFNVGHD). The Histidine box-1 motif lies at 88–92 (HDANH). Residues 123–128 (HNYLHH) carry the Histidine box-2 motif. Transmembrane regions (helical) follow at residues 165–185 (IWGLYLFIPFYWFLYDVYLVL), 206–226 (LLGIKLLWLGYVFGLPLALGF), and 231–251 (VLIGASVTYMTYGIVVCTIFM). A Histidine box-3 motif is present at residues 306-310 (HHLFP).

Belongs to the fatty acid desaturase type 2 family. Requires Fe(2+) as cofactor.

The protein resides in the membrane. The catalysed reaction is a 1-[(9Z,12Z)-octadecdienoyl]-2-acyl-glycerolipid + 2 reduced [2Fe-2S]-[ferredoxin] + O2 + 2 H(+) = a 1-[(6Z,9Z,12Z)-octadectrienoyl]-2-acyl-glycerolipid + 2 oxidized [2Fe-2S]-[ferredoxin] + 2 H2O. Its pathway is lipid metabolism; polyunsaturated fatty acid biosynthesis. Functionally, desaturase involved in fatty acid biosynthesis. Introduces a double bond at carbon 6 of linoleoyl group (18:2) attached to the sn-1 position of the glycerol moiety of membrane glycerolipids, leading to the formation of gamma-linolenic acid (GLA). This Synechocystis sp. (strain ATCC 27184 / PCC 6803 / Kazusa) protein is sn-1 linoleoyl-lipid 6-desaturase.